Consider the following 492-residue polypeptide: Falcipain-3 (492 aa).

Residues 1 to 35 (MEYHMEYSPNEVIKQEREVFVGKEKSGSKFKRKRS) lie on the Cytoplasmic side of the membrane. A propeptide spans 1–242 (MEYHMEYSPN…LNLKTHGPFK (242 aa)) (activation peptide). The Bipartite vacuolar targeting signal 1 motif lies at 16 to 25 (EREVFVGKEK). Residues 36-56 (IFIVLTVSICFMFALMLFYFT) form a helical; Signal-anchor for type II membrane protein membrane-spanning segment. Residues 57-492 (RNENNKTLFT…GTEAYVPLLE (436 aa)) are Lumenal-facing. The N-linked (GlcNAc...) asparagine glycan is linked to Asn-61. The Bipartite vacuolar targeting signal 2 signature appears at 84-105 (KSESGKKFIVSKLEELISSYDK). An N-linked (GlcNAc...) asparagine glycan is attached at Asn-129. The Nose motif; required for the correct folding of the mature form motif lies at 251-268 (EANYEDVIKKYKPADAKL). Intrachain disulfides connect Cys-290/Cys-331, Cys-324/Cys-365, Cys-350/Cys-370, and Cys-419/Cys-480. Cys-293 is a catalytic residue. Residue His-425 is part of the active site. The Arm motif; binds to host hemoglobin and required for the inhibitory interaction between the propeptide and the catalytic domain signature appears at 436–445 (DIYNEDTGRM). Residue Asn-455 is part of the active site.

This sequence belongs to the peptidase C1 family. Post-translationally, auto-cleavage occurs at acidic pH. The proenzyme is the predominant form in late trophozoites and both the pro and mature enzyme are present in schizonts.

It is found in the membrane. Its subcellular location is the vacuole. The protein resides in the cytoplasmic vesicle membrane. Its activity is regulated as follows. Inhibited by cysteine protease inhibitor ICP. Cysteine protease which cleaves native host hemoglobin and globin in the food vacuole during the asexual blood stage. Preferentially cleaves substrates which have an arginine at the P1 position and a leucine at the P2 position. This Plasmodium falciparum (isolate 3D7) protein is Falcipain-3.